A 402-amino-acid chain; its full sequence is Dihydrolipoyllysine-residue acetyltransferase component of pyruvate dehydrogenase complex (402 aa).

The Lipoyl-binding domain occupies 1–69; that stretch reads MPDIGLEEVE…KTSSIIMIFK (69 aa). N6-lipoyllysine is present on Lys-35. The region spanning 109-146 is the Peripheral subunit-binding (PSBD) domain; that stretch reads HATPVVRRLARHLNVDLKNITPSGPKNRILKEDIELYI. Residue His-375 is part of the active site.

This sequence belongs to the 2-oxoacid dehydrogenase family. As to quaternary structure, forms a 24-polypeptide structural core with octahedral symmetry. (R)-lipoate serves as cofactor.

It catalyses the reaction N(6)-[(R)-dihydrolipoyl]-L-lysyl-[protein] + acetyl-CoA = N(6)-[(R)-S(8)-acetyldihydrolipoyl]-L-lysyl-[protein] + CoA. Its function is as follows. The pyruvate dehydrogenase complex catalyzes the overall conversion of pyruvate to acetyl-CoA and CO(2). It contains multiple copies of three enzymatic components: pyruvate dehydrogenase (E1), dihydrolipoamide acetyltransferase (E2) and lipoamide dehydrogenase (E3). This is Dihydrolipoyllysine-residue acetyltransferase component of pyruvate dehydrogenase complex (aceF) from Buchnera aphidicola subsp. Schizaphis graminum (strain Sg).